A 604-amino-acid chain; its full sequence is Pescadillo homolog (604 aa).

The 100-residue stretch at 349 to 448 (PTSTLFSKFI…ELLPVNKYAP (100 aa)) folds into the BRCT domain. Disordered stretches follow at residues 452–562 (LPPH…MTNK) and 579–604 (TRTQ…LSKK). Coiled coils occupy residues 468–522 (EAEK…LEAA) and 573–604 (GIDK…LSKK). Residues 476 to 510 (ENAEEEEEDEVDEDDEDADEDEEDEEEEDEEEDED) show a composition bias toward acidic residues. The span at 593–604 (KTKAQLDKLSKK) shows a compositional bias: basic and acidic residues.

Belongs to the pescadillo family. As to quaternary structure, component of the NOP7 complex, composed of ERB1, NOP7 and YTM1. The complex is held together by ERB1, which interacts with NOP7 via its N-terminal domain and with YTM1 via a high-affinity interaction between the seven-bladed beta-propeller domains of the 2 proteins. The NOP7 complex associates with the 66S pre-ribosome.

It is found in the nucleus. Its subcellular location is the nucleolus. It localises to the nucleoplasm. In terms of biological role, component of the NOP7 complex, which is required for maturation of the 25S and 5.8S ribosomal RNAs and formation of the 60S ribosome. This Scheffersomyces stipitis (strain ATCC 58785 / CBS 6054 / NBRC 10063 / NRRL Y-11545) (Yeast) protein is Pescadillo homolog.